The sequence spans 478 residues: Septin-4 (478 aa).

The disordered stretch occupies residues 38-115 (VKDFSGNESC…RSPWGKLDPY (78 aa)). Residues 95–108 (APAPLSPSARPRSP) show a composition bias toward low complexity. A phosphoserine mark is found at S117 and S118. Residues 141–414 (KGFDFTLMVA…ENYRAQCIQS (274 aa)) enclose the Septin-type G domain. The G1 motif stretch occupies residues 151 to 158 (GESGLGKS). GTP contacts are provided by residues 151–158 (GESGLGKS) and T185. Positions 208 to 211 (DTPG) are G3 motif. Residues 289-292 (AKAD) form a G4 motif region. Residue 290-298 (KADTLTPPE) participates in GTP binding. S325 carries the phosphoserine modification. GTP contacts are provided by G348 and R363. A disordered region spans residues 425-448 (RNKLTRESGTDLPIPAVPPGTDPE). Phosphoserine is present on S432. The residue at position 434 (T434) is a Phosphothreonine. Residues 446–478 (DPETEKLIREKDEELRRMQEMLHKIQKQMKETY) are a coiled coil.

The protein belongs to the TRAFAC class TrmE-Era-EngA-EngB-Septin-like GTPase superfamily. Septin GTPase family. Septins polymerize into heterooligomeric protein complexes that form filaments, and can associate with cellular membranes, actin filaments and microtubules. GTPase activity is required for filament formation. Interacts with SEPTIN8. Component of a septin core octameric complex consisting of SEPTIN12, SEPTIN7, SEPTIN6 and SEPTIN2 or SEPTIN4 in the order 12-7-6-2-2-6-7-12 or 12-7-6-4-4-6-7-12. Interacts with SEPTIN14 (via C-terminus). Interacts with DYRK1A. Interacts with SLC6A3/DAT and SNCA/alpha-synuclein. Interacts with STX1A; in the striatum. Interacts with XIAP (via BIR3 domain) following the induction of apoptosis. Interacts with AREL1 (via HECT domain); in the cytoplasm following induction of apoptosis. Ubiquitinated by AREL1. Post-translationally, phosphorylated by DYRK1A.

Its subcellular location is the cytoplasm. It is found in the cell projection. The protein localises to the cilium. The protein resides in the flagellum. It localises to the cytoplasmic vesicle. Its subcellular location is the secretory vesicle. It is found in the axon. The protein localises to the dendrite. The protein resides in the perikaryon. It localises to the synapse. Its function is as follows. Filament-forming cytoskeletal GTPase. Pro-apoptotic protein involved in LGR5-positive intestinal stem cell and Paneth cell expansion in the intestines, via its interaction with XIAP. May also play a role in the regulation of cell fate in the intestine. Positive regulator of apoptosis involved in hematopoietic stem cell homeostasis; via its interaction with XIAP. Negative regulator of repair and hair follicle regeneration in response to injury, due to inhibition of hair follicle stem cell proliferation, potentially via its interaction with XIAP. Plays an important role in male fertility and sperm motility. During spermiogenesis, essential for the establishment of the annulus (a fibrous ring structure connecting the midpiece and the principal piece of the sperm flagellum) which is a requisite for the structural and mechanical integrity of the sperm. Involved in the migration of cortical neurons and the formation of neuron leading processes during embryonic development. Required for dopaminergic metabolism in presynaptic autoreceptors; potentially via activity as a presynaptic scaffold protein. This is Septin-4 from Pongo abelii (Sumatran orangutan).